The following is a 213-amino-acid chain: Thymidylate kinase (213 aa).

10-17 contributes to the ATP binding site; that stretch reads GLEGAGKT.

The protein belongs to the thymidylate kinase family.

The catalysed reaction is dTMP + ATP = dTDP + ADP. Phosphorylation of dTMP to form dTDP in both de novo and salvage pathways of dTTP synthesis. This Escherichia coli O81 (strain ED1a) protein is Thymidylate kinase.